Here is a 329-residue protein sequence, read N- to C-terminus: Nicotianamine synthase 8 (329 aa).

The protein belongs to the nicotianamine synthase (NAS)-like family. In terms of assembly, homotrimer.

It catalyses the reaction 3 S-adenosyl-L-methionine = nicotianamine + 3 S-methyl-5'-thioadenosine + 3 H(+). Functionally, synthesizes nicotianamine, a polyamine that is the first intermediate in the synthesis of the phytosiderophores of the mugineic acid type found in gramineae which serve as a sensor for the physiological iron status within the plant, and/or might be involved in the transport of iron. The polypeptide is Nicotianamine synthase 8 (NAS8) (Hordeum vulgare (Barley)).